Consider the following 389-residue polypeptide: Methylthioribose-1-phosphate isomerase (389 aa).

Catalysis depends on Asp-258, which acts as the Proton donor.

The protein belongs to the eIF-2B alpha/beta/delta subunits family. MtnA subfamily.

The protein resides in the cytoplasm. Its subcellular location is the nucleus. The enzyme catalyses 5-(methylsulfanyl)-alpha-D-ribose 1-phosphate = 5-(methylsulfanyl)-D-ribulose 1-phosphate. The protein operates within amino-acid biosynthesis; L-methionine biosynthesis via salvage pathway; L-methionine from S-methyl-5-thio-alpha-D-ribose 1-phosphate: step 1/6. Functionally, catalyzes the interconversion of methylthioribose-1-phosphate (MTR-1-P) into methylthioribulose-1-phosphate (MTRu-1-P). The protein is Methylthioribose-1-phosphate isomerase of Chaetomium globosum (strain ATCC 6205 / CBS 148.51 / DSM 1962 / NBRC 6347 / NRRL 1970) (Soil fungus).